A 65-amino-acid chain; its full sequence is Alpha-toxin Bs-Tx28 (65 aa).

Residues Arg3–Arg65 enclose the LCN-type CS-alpha/beta domain. 4 disulfides stabilise this stretch: Cys13/Cys64, Cys17/Cys37, Cys23/Cys47, and Cys27/Cys49. Residue Arg65 is modified to Arginine amide.

The protein belongs to the long (4 C-C) scorpion toxin superfamily. Sodium channel inhibitor family. Alpha subfamily. As to expression, expressed by the venom gland.

It localises to the secreted. Its function is as follows. Alpha toxins bind voltage-independently at site-3 of sodium channels (Nav) and inhibit the inactivation of the activated channels, thereby blocking neuronal transmission. This toxin inhibits the inactivation of activated TTX-sensitive sodium channels (Nav). The chain is Alpha-toxin Bs-Tx28 from Hottentotta tamulus sindicus (Scorpion).